The sequence spans 544 residues: CTP synthase (544 aa).

Positions methionine 1 to leucine 266 are amidoligase domain. Serine 14 provides a ligand contact to CTP. Serine 14 contributes to the UTP binding site. Residues serine 15–isoleucine 20 and aspartate 72 contribute to the ATP site. The Mg(2+) site is built by aspartate 72 and glutamate 140. Residues aspartate 147 to glutamate 149, lysine 187 to glutamine 192, and lysine 223 contribute to the CTP site. Residues lysine 187 to glutamine 192 and lysine 223 contribute to the UTP site. Positions threonine 291–alanine 542 constitute a Glutamine amidotransferase type-1 domain. Glycine 352 contributes to the L-glutamine binding site. The Nucleophile; for glutamine hydrolysis role is filled by cysteine 379. L-glutamine is bound by residues leucine 380–glutamine 383, glutamate 403, and arginine 470. Active-site residues include histidine 515 and glutamate 517.

It belongs to the CTP synthase family. Homotetramer.

The enzyme catalyses UTP + L-glutamine + ATP + H2O = CTP + L-glutamate + ADP + phosphate + 2 H(+). It carries out the reaction L-glutamine + H2O = L-glutamate + NH4(+). The catalysed reaction is UTP + NH4(+) + ATP = CTP + ADP + phosphate + 2 H(+). Its pathway is pyrimidine metabolism; CTP biosynthesis via de novo pathway; CTP from UDP: step 2/2. With respect to regulation, allosterically activated by GTP, when glutamine is the substrate; GTP has no effect on the reaction when ammonia is the substrate. The allosteric effector GTP functions by stabilizing the protein conformation that binds the tetrahedral intermediate(s) formed during glutamine hydrolysis. Inhibited by the product CTP, via allosteric rather than competitive inhibition. Catalyzes the ATP-dependent amination of UTP to CTP with either L-glutamine or ammonia as the source of nitrogen. Regulates intracellular CTP levels through interactions with the four ribonucleotide triphosphates. The sequence is that of CTP synthase from Pseudoalteromonas translucida (strain TAC 125).